The primary structure comprises 741 residues: MMRQGGVMVGARKRWITDWWPNRLNLKILRQNLQNPYGEDYDYVEEVENLDIDAVIRDLKELMRSSQDWWPADFGHYGPLFIRLAWHSAGSYRIFDGRGGARDGSIRFPPRINWPDNINLDKAIRLLWPIKKKYGRKLSWADLIILAGTVAMEDMGVKLFGFALGREDIFEPDESPDWGPEEEMLTAKRGEKEELERPFAATEMGLIYVNPEGPGGNPDPLGSAQEIRVAFRRMGMNDEETVALIAGGHAFGKCHGAGPADYLGPDPSSSPIEMQGLGWKYNYGKGKGSDTFTSGLEVTWSPTPTKFGINYLRILFTYEWELEKSPAGKNQWVAKDAPEIIPDAHDPNKKHRPRMLTADLALRFDPEFSKIARRFLENPEEFEKAFAIAWYKLTHRDMGPKDCYIGKYVPEETFVWQDPLPRRDYELVDEKDVEELKRRILASGLSLSQLVYFAWASASTYRNSDRRGGANGARIRLKPMSVWEVNHPEELKKVIAAYEKIQQEFNEGAKGSEKRISIADLIVLGGIAAVEEAARRAGFSVKVPFIPGRVDAQQEHVDEEFYRVIEPFADGFRNYFRYPERINERDVYTTPEYFLVDKANLLTLTVPEMVVLIGGMRALGANYSHSDYGVLTERPGVLSNDFFVNLLDMSVEWRAADDYRYTFEGYDRKSGELRWRATRVDLILGHHDELRAVAEVYGCDDAKEKFVKDFAAVCAKVMHLDRFDLWRSNRKLYKEITAGLR.

The segment at residues 86-208 (WHSAGSYRIF…FAATEMGLIY (123 aa)) is a cross-link (tryptophyl-tyrosyl-methioninium (Trp-Tyr) (with M-234)). His-87 serves as the catalytic Proton acceptor. Residues 208-234 (YVNPEGPGGNPDPLGSAQEIRVAFRRM) constitute a cross-link (tryptophyl-tyrosyl-methioninium (Tyr-Met) (with W-86)). His-249 lines the heme b pocket.

This sequence belongs to the peroxidase family. Peroxidase/catalase subfamily. As to quaternary structure, homodimer or homotetramer. The cofactor is heme b. In terms of processing, formation of the three residue Trp-Tyr-Met cross-link is important for the catalase, but not the peroxidase activity of the enzyme.

It catalyses the reaction H2O2 + AH2 = A + 2 H2O. The catalysed reaction is 2 H2O2 = O2 + 2 H2O. In terms of biological role, bifunctional enzyme with both catalase and broad-spectrum peroxidase activity. Also displays NADH oxidase, INH lyase and isonicotinoyl-NAD synthase activities. The sequence is that of Catalase-peroxidase from Archaeoglobus fulgidus (strain ATCC 49558 / DSM 4304 / JCM 9628 / NBRC 100126 / VC-16).